Consider the following 457-residue polypeptide: Methanethiol oxidase (457 aa).

It belongs to the selenium-binding protein family.

Its subcellular location is the nucleus. The protein resides in the cytoplasm. It is found in the cytosol. The protein localises to the membrane. It carries out the reaction methanethiol + O2 + H2O = hydrogen sulfide + formaldehyde + H2O2 + H(+). It participates in organosulfur degradation. Functionally, catalyzes the oxidation of methanethiol, an organosulfur compound known to be produced in substantial amounts by gut bacteria. Selenium-binding protein which may be involved in the sensing of reactive xenobiotics in the cytoplasm. May be involved in intra-Golgi protein transport. The chain is Methanethiol oxidase (selenbp1) from Danio rerio (Zebrafish).